We begin with the raw amino-acid sequence, 277 residues long: Cis-2,3-dihydrobiphenyl-2,3-diol dehydrogenase (277 aa).

NAD(+) contacts are provided by residues 9–36 (LITGGASGLGRALVDRFVAEGAKVAVLD) and Asp-59. Ser-142 lines the substrate pocket. The active-site Proton acceptor is Tyr-155. Lys-159 lines the NAD(+) pocket.

This sequence belongs to the short-chain dehydrogenases/reductases (SDR) family.

The catalysed reaction is (2R,3S)-3-phenylcyclohexa-3,5-diene-1,2-diol + NAD(+) = biphenyl-2,3-diol + NADH + H(+). It functions in the pathway xenobiotic degradation; biphenyl degradation; 2-hydroxy-2,4-pentadienoate and benzoate from biphenyl: step 2/4. This Paraburkholderia xenovorans (strain LB400) protein is Cis-2,3-dihydrobiphenyl-2,3-diol dehydrogenase (bphB).